We begin with the raw amino-acid sequence, 1195 residues long: Chromosome partition protein Smc (1195 aa).

33–40 is a binding site for ATP; it reads PNGSGKSN. Coiled coils occupy residues 185 to 241, 273 to 348, and 380 to 528; these read GVAQ…RQEQ, DAAT…IQAL, and QYQQ…QETQ. The SMC hinge domain maps to 542-658; sequence PGVHGLVAQL…FERLDQARRY (117 aa). A coiled-coil region spans residues 698 to 1043; that stretch reads GESAEVRAIR…ELLLRIENFT (346 aa).

The protein belongs to the SMC family. Homodimer.

The protein resides in the cytoplasm. Functionally, required for chromosome condensation and partitioning. The sequence is that of Chromosome partition protein Smc from Synechococcus sp. (strain ATCC 27144 / PCC 6301 / SAUG 1402/1) (Anacystis nidulans).